Consider the following 447-residue polypeptide: Na(+)-translocating NADH-quinone reductase subunit A (447 aa).

Belongs to the NqrA family. As to quaternary structure, composed of six subunits; NqrA, NqrB, NqrC, NqrD, NqrE and NqrF.

It catalyses the reaction a ubiquinone + n Na(+)(in) + NADH + H(+) = a ubiquinol + n Na(+)(out) + NAD(+). Functionally, NQR complex catalyzes the reduction of ubiquinone-1 to ubiquinol by two successive reactions, coupled with the transport of Na(+) ions from the cytoplasm to the periplasm. NqrA to NqrE are probably involved in the second step, the conversion of ubisemiquinone to ubiquinol. The chain is Na(+)-translocating NADH-quinone reductase subunit A from Saccharophagus degradans (strain 2-40 / ATCC 43961 / DSM 17024).